The chain runs to 452 residues: Phosphoglucosamine mutase (452 aa).

Catalysis depends on Ser104, which acts as the Phosphoserine intermediate. Residues Ser104, Asp246, Asp248, and Asp250 each coordinate Mg(2+). The residue at position 104 (Ser104) is a Phosphoserine.

It belongs to the phosphohexose mutase family. Requires Mg(2+) as cofactor. Activated by phosphorylation.

The catalysed reaction is alpha-D-glucosamine 1-phosphate = D-glucosamine 6-phosphate. Its function is as follows. Catalyzes the conversion of glucosamine-6-phosphate to glucosamine-1-phosphate. In Streptomyces coelicolor (strain ATCC BAA-471 / A3(2) / M145), this protein is Phosphoglucosamine mutase.